The primary structure comprises 895 residues: DNA double-strand break repair Rad50 ATPase (895 aa).

Residues 32 to 38 (NGAGKSS) and Gln137 each bind ATP. A coiled-coil region spans residues 183-253 (SDYDYLKNEL…LNAQLETIKK (71 aa)). A Zinc-hook domain is found at 411–507 (RAEINSSLMQ…ERKHQKKLLD (97 aa)). Zn(2+)-binding residues include Cys455 and Cys458. 2 coiled-coil regions span residues 464-510 (TEKS…DRIN) and 618-647 (ENSL…AMDE).

It belongs to the SMC family. RAD50 subfamily. In terms of assembly, homodimer. Forms a heterotetramer composed of two Mre11 subunits and two Rad50 subunits. The cofactor is Zn(2+).

In terms of biological role, part of the Rad50/Mre11 complex, which is involved in the early steps of DNA double-strand break (DSB) repair. The complex may facilitate opening of the processed DNA ends to aid in the recruitment of HerA and NurA. Rad50 controls the balance between DNA end bridging and DNA resection via ATP-dependent structural rearrangements of the Rad50/Mre11 complex. This chain is DNA double-strand break repair Rad50 ATPase, found in Thermoplasma volcanium (strain ATCC 51530 / DSM 4299 / JCM 9571 / NBRC 15438 / GSS1).